Consider the following 102-residue polypeptide: Putative sortase YwpE (102 aa).

The active-site Proton donor/acceptor is His-17. Cys-78 (acyl-thioester intermediate) is an active-site residue.

This sequence belongs to the bacterial sortase family.

In terms of biological role, seems not to play a major role if any as a sortase. In Bacillus subtilis (strain 168), this protein is Putative sortase YwpE (ywpE).